A 442-amino-acid polypeptide reads, in one-letter code: Trigger factor (442 aa).

The PPIase FKBP-type domain occupies 165 to 250; that stretch reads DDRVIIDFEG…LQKVMAPELP (86 aa).

Belongs to the FKBP-type PPIase family. Tig subfamily.

The protein resides in the cytoplasm. It carries out the reaction [protein]-peptidylproline (omega=180) = [protein]-peptidylproline (omega=0). Functionally, involved in protein export. Acts as a chaperone by maintaining the newly synthesized protein in an open conformation. Functions as a peptidyl-prolyl cis-trans isomerase. The protein is Trigger factor of Coxiella burnetii (strain CbuG_Q212) (Coxiella burnetii (strain Q212)).